We begin with the raw amino-acid sequence, 455 residues long: Chromosomal replication initiator protein DnaA (455 aa).

Residues 1-75 (MDTNNNIEKE…EILSQNKVGM (75 aa)) form a domain I, interacts with DnaA modulators region. A domain II region spans residues 75–106 (MHLAHSVDVRIEVAPKIQISTQSNINYKATKM). The segment at 107–321 (SVKDSYTFEN…GAIIKISVNA (215 aa)) is domain III, AAA+ region. Residues Gly-151, Gly-153, Lys-154, and Thr-155 each contribute to the ATP site. The interval 322-455 (NLMNASIDLN…DKKTAFNSSE (134 aa)) is domain IV, binds dsDNA.

Belongs to the DnaA family. As to quaternary structure, oligomerizes as a right-handed, spiral filament on DNA at oriC.

The protein localises to the cytoplasm. Functionally, plays an essential role in the initiation and regulation of chromosomal replication. ATP-DnaA binds to the origin of replication (oriC) to initiate formation of the DNA replication initiation complex once per cell cycle. Binds the DnaA box (a 9 base pair repeat at the origin) and separates the double-stranded (ds)DNA. Forms a right-handed helical filament on oriC DNA; dsDNA binds to the exterior of the filament while single-stranded (ss)DNA is stabiized in the filament's interior. The ATP-DnaA-oriC complex binds and stabilizes one strand of the AT-rich DNA unwinding element (DUE), permitting loading of DNA polymerase. After initiation quickly degrades to an ADP-DnaA complex that is not apt for DNA replication. Binds acidic phospholipids. This chain is Chromosomal replication initiator protein DnaA, found in Helicobacter pylori (strain HPAG1).